The primary structure comprises 345 residues: Ferrochelatase (345 aa).

His215 and Glu296 together coordinate Fe cation.

The protein belongs to the ferrochelatase family.

It localises to the cytoplasm. The enzyme catalyses heme b + 2 H(+) = protoporphyrin IX + Fe(2+). The protein operates within porphyrin-containing compound metabolism; protoheme biosynthesis; protoheme from protoporphyrin-IX: step 1/1. In terms of biological role, catalyzes the ferrous insertion into protoporphyrin IX. This chain is Ferrochelatase, found in Rhodopseudomonas palustris (strain BisA53).